The following is a 499-amino-acid chain: Probable cytosol aminopeptidase (499 aa).

Mn(2+)-binding residues include K269 and D274. K281 is a catalytic residue. Mn(2+)-binding residues include D292, D351, and E353. R355 is a catalytic residue.

This sequence belongs to the peptidase M17 family. Mn(2+) serves as cofactor.

Its subcellular location is the cytoplasm. The catalysed reaction is Release of an N-terminal amino acid, Xaa-|-Yaa-, in which Xaa is preferably Leu, but may be other amino acids including Pro although not Arg or Lys, and Yaa may be Pro. Amino acid amides and methyl esters are also readily hydrolyzed, but rates on arylamides are exceedingly low.. It carries out the reaction Release of an N-terminal amino acid, preferentially leucine, but not glutamic or aspartic acids.. Functionally, presumably involved in the processing and regular turnover of intracellular proteins. Catalyzes the removal of unsubstituted N-terminal amino acids from various peptides. The chain is Probable cytosol aminopeptidase from Actinobacillus pleuropneumoniae serotype 5b (strain L20).